The following is an 88-amino-acid chain: Small ribosomal subunit protein uS17 (88 aa).

The protein belongs to the universal ribosomal protein uS17 family. In terms of assembly, part of the 30S ribosomal subunit.

In terms of biological role, one of the primary rRNA binding proteins, it binds specifically to the 5'-end of 16S ribosomal RNA. This chain is Small ribosomal subunit protein uS17, found in Synechococcus sp. (strain WH7803).